Reading from the N-terminus, the 208-residue chain is Holliday junction branch migration complex subunit RuvA (208 aa).

The tract at residues 1–64 (MIGKLKGIVD…EDMIRLYGFR (64 aa)) is domain I. The interval 65–143 (SDAEREWFRL…AFAPVDPALV (79 aa)) is domain II. A flexible linker region spans residues 144–152 (ALTGAVEDR). The domain III stretch occupies residues 153–208 (TAPQPVADAISALVNLGYPQVQASAAIAAALKGLGDGAETVEAKTLIRLGLRELAR).

Belongs to the RuvA family. In terms of assembly, homotetramer. Forms an RuvA(8)-RuvB(12)-Holliday junction (HJ) complex. HJ DNA is sandwiched between 2 RuvA tetramers; dsDNA enters through RuvA and exits via RuvB. An RuvB hexamer assembles on each DNA strand where it exits the tetramer. Each RuvB hexamer is contacted by two RuvA subunits (via domain III) on 2 adjacent RuvB subunits; this complex drives branch migration. In the full resolvosome a probable DNA-RuvA(4)-RuvB(12)-RuvC(2) complex forms which resolves the HJ.

It is found in the cytoplasm. Functionally, the RuvA-RuvB-RuvC complex processes Holliday junction (HJ) DNA during genetic recombination and DNA repair, while the RuvA-RuvB complex plays an important role in the rescue of blocked DNA replication forks via replication fork reversal (RFR). RuvA specifically binds to HJ cruciform DNA, conferring on it an open structure. The RuvB hexamer acts as an ATP-dependent pump, pulling dsDNA into and through the RuvAB complex. HJ branch migration allows RuvC to scan DNA until it finds its consensus sequence, where it cleaves and resolves the cruciform DNA. This is Holliday junction branch migration complex subunit RuvA from Methylorubrum populi (strain ATCC BAA-705 / NCIMB 13946 / BJ001) (Methylobacterium populi).